A 138-amino-acid chain; its full sequence is Putative pre-16S rRNA nuclease (138 aa).

It belongs to the YqgF nuclease family.

It is found in the cytoplasm. Its function is as follows. Could be a nuclease involved in processing of the 5'-end of pre-16S rRNA. This chain is Putative pre-16S rRNA nuclease, found in Caldicellulosiruptor saccharolyticus (strain ATCC 43494 / DSM 8903 / Tp8T 6331).